Here is an 877-residue protein sequence, read N- to C-terminus: MSGGRDSSTSSGSNSAAPGASTNATSSASASASSTSTSASPGSTTSPASTQRQRGRPAKRATCTWCGEGKLPLQYVLPTQTGKKEFCSETCIAEFRKAYSKGACTQCDNVIRDGAPNKEFCSIMCMNKHQKKNCSTRHSGGSASGKGLAESERKLLASGAPAPTGPFQYESFHVFDWDAYLEETGSEAAPAKCFKQAQNPPNNDFKIGMKLEALDPRNVTSTCIATVVGVLGSRLRLRLDGSDSQNDFWRLVDSTEIHAIGHCEKNGGMLQPPLGFRMNASSWPGYLCKILNNAMVAPEEIFQPEPPEPEENLFKVGQKLEAVDKKNPQLICCATVDAIKDDQIHVTFDGWRGAFDYWCNYRSRDIFPAGWCARSCHPMQPPGHKSRMDSSSSKQRCPRPRYTVVAESEAMVPASPATAHFHPNCKGGPFINNSKLPCMVTGPTYQTLAKLCLQEVLAASTDTQQLSKLLFALEGDVHIVTAAGKNFTVKIPSPMRMKDDESLAQFIETLCTTCRACANLISLVHETEECKKCANSRKRQLTQSATPPSSPVLADKRNRQSNSATTSPSEKIIKQELAVKSPVESKSKTSTNNGKEPASQQNSNHSLNNNNNSASKSSNKVVIKSEPNGANAQTSSTTQALRKVRFQHHANTNTNSSATNGNQDTSQTTHVSTSHCSSSSTSSSTSLAGGSANTSTIGKYLAPLVAEVHPEQANVKPSNSYYKSPTTLSSSASLPTSVSTPFTGCQSASSTALAAGGVTAAKAATAPAGAAATAGASPSYTAITSPVSTPTSALANSHLRSQPIDWTIEEVIQYIESNDNSLAVHGDLFRKHEIDGKALLLLNSEMMMKYMGLKLGPALKICNLVNKVNGRRNNLAL.

The interval 1–57 (MSGGRDSSTSSGSNSAAPGASTNATSSASASASSTSTSASPGSTTSPASTQRQRGRP) is disordered. The span at 7-50 (SSTSSGSNSAAPGASTNATSSASASASSTSTSASPGSTTSPAST) shows a compositional bias: low complexity. The segment at 54–93 (RGRPAKRATCTWCGEGKLPLQYVLPTQTGKKEFCSETCIA) adopts an FCS-type zinc-finger fold. Residues Cys63, Cys66, Cys87, and Cys91 each contribute to the Zn(2+) site. 2 MBT repeats span residues 175–273 (FDWD…LQPP) and 281–382 (SSWP…MQPP). Disordered regions lie at residues 535–621 (NSRK…SNKV), 652–692 (TNTN…GGSA), and 713–735 (ANVKPSNSYYKSPTTLSSSASLP). The residue at position 546 (Thr546) is a Phosphothreonine. A phosphoserine mark is found at Ser549 and Ser550. Positions 560–569 (QSNSATTSPS) are enriched in polar residues. A Phosphoserine modification is found at Ser585. Over residues 598-620 (ASQQNSNHSLNNNNNSASKSSNK) the composition is skewed to low complexity. Residues 724-735 (SPTTLSSSASLP) are compositionally biased toward low complexity. In terms of domain architecture, SAM spans 806 to 876 (WTIEEVIQYI…KVNGRRNNLA (71 aa)).

This sequence belongs to the SCM family. Scm associates with the PRC1 core complex containing PSC, PC, PH and Sce/RING1. Forms homotypic and heterotypic interactions. Interacts with the SAM domain of ph-p via its SAM domain in vitro. Interacts with corto in vitro.

The protein resides in the nucleus. Polycomb group (PcG) protein. PcG proteins act by forming multiprotein complexes, which are required to maintain the transcriptionally repressive state of homeotic genes throughout development. PcG proteins are not required to initiate repression, but to maintain it during later stages of development. They probably act via the methylation of histones, rendering chromatin heritably changed in its expressibility. In Drosophila melanogaster (Fruit fly), this protein is Polycomb protein Scm.